Reading from the N-terminus, the 198-residue chain is Na(+)-translocating NADH-quinone reductase subunit E (198 aa).

6 helical membrane-spanning segments follow: residues 11–31 (SIFI…FLAV), 39–59 (FGLG…NNLV), 77–97 (FLNF…LEMI), 110–130 (GIFL…SFMV), 140–160 (IVYG…LAGI), and 176–196 (LGIT…FSGV).

The protein belongs to the NqrDE/RnfAE family. In terms of assembly, composed of six subunits; NqrA, NqrB, NqrC, NqrD, NqrE and NqrF.

It localises to the cell inner membrane. It catalyses the reaction a ubiquinone + n Na(+)(in) + NADH + H(+) = a ubiquinol + n Na(+)(out) + NAD(+). NQR complex catalyzes the reduction of ubiquinone-1 to ubiquinol by two successive reactions, coupled with the transport of Na(+) ions from the cytoplasm to the periplasm. NqrA to NqrE are probably involved in the second step, the conversion of ubisemiquinone to ubiquinol. This is Na(+)-translocating NADH-quinone reductase subunit E from Photobacterium profundum (strain SS9).